The following is a 202-amino-acid chain: Dephospho-CoA kinase (202 aa).

Residues I5–P202 enclose the DPCK domain. Residue G13–A18 participates in ATP binding.

This sequence belongs to the CoaE family.

The protein resides in the cytoplasm. The catalysed reaction is 3'-dephospho-CoA + ATP = ADP + CoA + H(+). Its pathway is cofactor biosynthesis; coenzyme A biosynthesis; CoA from (R)-pantothenate: step 5/5. Catalyzes the phosphorylation of the 3'-hydroxyl group of dephosphocoenzyme A to form coenzyme A. This Stutzerimonas stutzeri (Pseudomonas stutzeri) protein is Dephospho-CoA kinase.